Here is a 264-residue protein sequence, read N- to C-terminus: Thymidylate synthase (264 aa).

DUMP is bound at residue Arg-21. His-51 is a binding site for (6R)-5,10-methylene-5,6,7,8-tetrahydrofolate. 126–127 contacts dUMP; it reads RR. Catalysis depends on Cys-146, which acts as the Nucleophile. DUMP contacts are provided by residues 166-169, Asn-177, and 207-209; these read RSCD and HLY. Asp-169 lines the (6R)-5,10-methylene-5,6,7,8-tetrahydrofolate pocket. (6R)-5,10-methylene-5,6,7,8-tetrahydrofolate is bound at residue Ala-263.

Belongs to the thymidylate synthase family. Bacterial-type ThyA subfamily. As to quaternary structure, homodimer.

It is found in the cytoplasm. The enzyme catalyses dUMP + (6R)-5,10-methylene-5,6,7,8-tetrahydrofolate = 7,8-dihydrofolate + dTMP. It functions in the pathway pyrimidine metabolism; dTTP biosynthesis. Functionally, catalyzes the reductive methylation of 2'-deoxyuridine-5'-monophosphate (dUMP) to 2'-deoxythymidine-5'-monophosphate (dTMP) while utilizing 5,10-methylenetetrahydrofolate (mTHF) as the methyl donor and reductant in the reaction, yielding dihydrofolate (DHF) as a by-product. This enzymatic reaction provides an intracellular de novo source of dTMP, an essential precursor for DNA biosynthesis. The chain is Thymidylate synthase from Photorhabdus laumondii subsp. laumondii (strain DSM 15139 / CIP 105565 / TT01) (Photorhabdus luminescens subsp. laumondii).